The primary structure comprises 161 residues: Large ribosomal subunit protein mL50 (161 aa).

A disordered region spans residues 27-51 (WGGHSKKEEKEVEENSIIPQEKKEP).

It belongs to the mitochondrion-specific ribosomal protein mL50 family. As to quaternary structure, component of the mitochondrial ribosome large subunit (39S) which comprises a 16S rRNA and about 50 distinct proteins.

The protein localises to the mitochondrion. This is Large ribosomal subunit protein mL50 (MRPL50) from Gallus gallus (Chicken).